Reading from the N-terminus, the 156-residue chain is Ribonuclease pancreatic (156 aa).

Residues 1 to 28 (MALEKSLVLLPLLVLILLVLGWVQPSLG) form the signal peptide. A compositionally biased stretch (basic and acidic residues) spans 33–43 (AKKFQRQHVDS). The disordered stretch occupies residues 33-53 (AKKFQRQHVDSDSSPSSSSTY). The substrate site is built by lysine 35 and arginine 38. Residue histidine 40 is the Proton acceptor of the active site. 4 disulfide bridges follow: cysteine 54/cysteine 112, cysteine 68/cysteine 123, cysteine 86/cysteine 138, and cysteine 93/cysteine 100. Asparagine 62 carries N-linked (GlcNAc...) asparagine glycosylation. Substrate-binding positions include 69–73 (KPVNT) and lysine 94. N-linked (GlcNAc...) asparagine glycosylation occurs at asparagine 104. Residue arginine 113 participates in substrate binding. N-linked (GlcNAc...) asparagine glycosylation occurs at asparagine 116. Histidine 147 acts as the Proton donor in catalysis.

It belongs to the pancreatic ribonuclease family. As to quaternary structure, monomer. Interacts with and forms tight 1:1 complexes with RNH1. Dimerization of two such complexes may occur. Interaction with RNH1 inhibits this protein. In terms of tissue distribution, pancreas and other tissues and body fluids (indicating it may have other physiological functions besides its role in digestion).

The protein resides in the secreted. It catalyses the reaction an [RNA] containing cytidine + H2O = an [RNA]-3'-cytidine-3'-phosphate + a 5'-hydroxy-ribonucleotide-3'-[RNA].. The catalysed reaction is an [RNA] containing uridine + H2O = an [RNA]-3'-uridine-3'-phosphate + a 5'-hydroxy-ribonucleotide-3'-[RNA].. In terms of biological role, endonuclease that catalyzes the cleavage of RNA on the 3' side of pyrimidine nucleotides. Acts on single-stranded and double-stranded RNA. This is Ribonuclease pancreatic (RNASE1) from Pan troglodytes (Chimpanzee).